The primary structure comprises 294 residues: MAMSSGGSGGGVPEQEDSVLFRRGTGQSDDSDIWDDTALIKAYDKAVASFKHALKNGDICETSGKPKTTPKRKPAKKNKSQKKNTAASLQQWKVGDKCSAIWSEDGCIYPATIASIDFKRETCVVVYTGYGNREEQNLSDLLSPICEVANNIEQNAQENENESQVSTDESENSRSPGNKSDNIKPKSAPWNSFLPPPPPMPGPRLGPGKPGLKFNGPPPPPPPPPPHLLSCWLPPFPSGPPIIPPPPPICPDSLDDADALGSMLISWYMSGYHTGYYMGFRQNQKEGRCSHSLN.

The segment covering Met-1 to Val-12 has biased composition (gly residues). The tract at residues Met-1 to Asp-32 is disordered. Ala-2 is subject to N-acetylalanine. 3 positions are modified to phosphoserine; by PKA: Ser-4, Ser-5, and Ser-8. The residue at position 25 (Thr-25) is a Phosphothreonine. Residues Gly-26 to Lys-51 form an interacts with GEMIN2 region. Phosphoserine occurs at positions 28 and 31. Lys-51 is covalently cross-linked (Glycyl lysine isopeptide (Lys-Gly) (interchain with G-Cter in SUMO2)). The interval Ile-59–Ser-88 is disordered. Residues Thr-68 to Lys-82 show a composition bias toward basic residues. Phosphothreonine is present on Thr-69. At Thr-85 the chain carries Phosphothreonine; by PKA. One can recognise a Tudor domain in the interval Gln-91–Asn-151. The required for interaction with RPP20/POP7 stretch occupies residues Lys-97–Lys-209. Low complexity predominate over residues Ala-156–Ser-166. The interval Ala-156–Pro-222 is disordered. Position 187 is a phosphoserine; by PKA (Ser-187). The segment covering Leu-194–Arg-204 has biased composition (pro residues). Over residues Gly-206 to Asn-215 the composition is skewed to low complexity. Residue Lys-209 forms a Glycyl lysine isopeptide (Lys-Gly) (interchain with G-Cter in SUMO2) linkage. Residues Pro-240–Trp-267 are P2 (binding site for SNRPB). Positions Asp-252–Phe-280 are involved in homooligomerization. Residues Gly-279 to Asn-294 are required for interaction with SYNCRIP.

It belongs to the SMN family. In terms of assembly, homooligomer; may form higher order homooligomers in the dimer to octamer range. Part of the core SMN complex that contains SMN1, GEMIN2/SIP1, DDX20/GEMIN3, GEMIN4, GEMIN5, GEMIN6, GEMIN7, GEMIN8 and STRAP/UNRIP. Part of the SMN-Sm complex that contains SMN1, GEMIN2/SIP1, DDX20/GEMIN3, GEMIN4, GEMIN5, GEMIN6, GEMIN7, GEMIN8, STRAP/UNRIP and the Sm proteins SNRPB, SNRPD1, SNRPD2, SNRPD3, SNRPE, SNRPF and SNRPG. Component of an import snRNP complex composed of KPNB1, RNUT1, SMN1 and ZNF259. Interacts with DDX20, FBL, NOLA1, RNUT1, SYNCRIP and with several spliceosomal snRNP core Sm proteins, including SNRPB, SNRPD1, SNRPD2, SNRPD3, SNRPE and ILF3. Interacts with GEMIN2; the interaction is direct. Interacts with GEMIN3; the interaction is direct. Interacts with GEMIN8; the interaction is direct. Interacts with SNRPB; the interaction is direct. Interacts (via Tudor domain) with SNRPD1 (via C-terminus); the interaction is direct. Interacts with SNRPD2; the interaction is direct. Interacts (via Tudor domain) with SNRPD3 (via C-terminus); the interaction is direct. Interacts with SNRPE; the interaction is direct. Interacts with OSTF1, LSM10, LSM11 and RPP20/POP7. Interacts (via C-terminal region) with ZPR1 (via C-terminal region). Interacts (via Tudor domain) with COIL. Interacts with SETX; recruits SETX to POLR2A. Interacts with POLR2A (via the C-terminal domain (CTD)). Interacts with PRMT5. Interacts with XRN2. Interacts (via C-terminus) with FMR1 (via C-terminus); the interaction is direct and occurs in a RNA-independent manner. Interacts (via Tudor domain) with SF3B2 ('Arg-508'-methylated form). Interacts with WRAP53/TCAB1. Interacts (via Tudor domain) with ELAVL4 in an RNA-independent manner; the interaction is required for localization of ELAVL4 to RNA granules. Interacts with FRG1. As to quaternary structure, does not homooligomerize. Does not interact with SNRPB. As to expression, expressed in a wide variety of tissues. Expressed at high levels in brain, kidney and liver, moderate levels in skeletal and cardiac muscle, and low levels in fibroblasts and lymphocytes. Also seen at high levels in spinal cord. Present in osteoclasts and mononuclear cells (at protein level).

It is found in the nucleus. It localises to the gem. Its subcellular location is the cajal body. The protein resides in the cytoplasm. The protein localises to the cytoplasmic granule. It is found in the perikaryon. It localises to the cell projection. Its subcellular location is the neuron projection. The protein resides in the axon. The protein localises to the myofibril. It is found in the sarcomere. It localises to the z line. The SMN complex catalyzes the assembly of small nuclear ribonucleoproteins (snRNPs), the building blocks of the spliceosome, and thereby plays an important role in the splicing of cellular pre-mRNAs. Most spliceosomal snRNPs contain a common set of Sm proteins SNRPB, SNRPD1, SNRPD2, SNRPD3, SNRPE, SNRPF and SNRPG that assemble in a heptameric protein ring on the Sm site of the small nuclear RNA to form the core snRNP (Sm core). In the cytosol, the Sm proteins SNRPD1, SNRPD2, SNRPE, SNRPF and SNRPG are trapped in an inactive 6S pICln-Sm complex by the chaperone CLNS1A that controls the assembly of the core snRNP. To assemble core snRNPs, the SMN complex accepts the trapped 5Sm proteins from CLNS1A forming an intermediate. Within the SMN complex, SMN1 acts as a structural backbone and together with GEMIN2 it gathers the Sm complex subunits. Binding of snRNA inside 5Sm ultimately triggers eviction of the SMN complex, thereby allowing binding of SNRPD3 and SNRPB to complete assembly of the core snRNP. Ensures the correct splicing of U12 intron-containing genes that may be important for normal motor and proprioceptive neurons development. Also required for resolving RNA-DNA hybrids created by RNA polymerase II, that form R-loop in transcription terminal regions, an important step in proper transcription termination. May also play a role in the metabolism of small nucleolar ribonucleoprotein (snoRNPs). In Homo sapiens (Human), this protein is Survival motor neuron protein (SMN1).